Here is a 428-residue protein sequence, read N- to C-terminus: MPGIVLIGAQWGDEGKGKATDLIGTKVDYVARFNGGNNAGHTVVVGDESYALHLLPSGIISPTATPVIGNGVVVDPEVLLEEIEGLESRGIDCSRLLVSESAHVIAPYHRMIDKVTERFAGKKKIGTTGRGIGPAYADKINRVGIRIADLFHEDVLRDKVSNALHQKNQMLVKLYNRRAFDVEATVQELLEVGVKLKPYVANTSLILNNALDDGKTVLFEGGQATMLDIDHGTYPFVTSSNPTAGGACTGTGVGPTKIDRVIGVSKAYVTRVGEGPFPTELFDENGEWLRAQGHEYGVTTGRPRRCGWFDAVVNRYATQVNGLTDIVLTKLDVLTGLDEIPVCVAYDVNGVRYDDMPTDQSAFAAAKPIYGMMPGWSEDISQVHAFEDLPQTCQDYVKRLEELSGCRISAIGTGPQRDHIIEVHSLLD.

GTP is bound by residues glycine 12–lysine 18 and glycine 40–threonine 42. Residue aspartate 13 is the Proton acceptor of the active site. Residues aspartate 13 and glycine 40 each contribute to the Mg(2+) site. IMP-binding positions include aspartate 13–lysine 16, asparagine 38–histidine 41, threonine 128, arginine 142, glutamine 223, threonine 238, and arginine 302. Histidine 41 serves as the catalytic Proton donor. Position 298–304 (valine 298–arginine 304) interacts with substrate. Residues arginine 304, lysine 330–aspartate 332, and glycine 412–glycine 414 each bind GTP.

The protein belongs to the adenylosuccinate synthetase family. As to quaternary structure, homodimer. The cofactor is Mg(2+).

It is found in the cytoplasm. It catalyses the reaction IMP + L-aspartate + GTP = N(6)-(1,2-dicarboxyethyl)-AMP + GDP + phosphate + 2 H(+). It functions in the pathway purine metabolism; AMP biosynthesis via de novo pathway; AMP from IMP: step 1/2. Its function is as follows. Plays an important role in the de novo pathway of purine nucleotide biosynthesis. Catalyzes the first committed step in the biosynthesis of AMP from IMP. The chain is Adenylosuccinate synthetase from Bifidobacterium animalis subsp. lactis (strain AD011).